Here is an 836-residue protein sequence, read N- to C-terminus: Zinc fingers and homeoboxes protein 2 (836 aa).

The segment at 1–61 is disordered; the sequence is MASKRKSTTP…EHSSKETEVV (61 aa). Polar residues predominate over residues 8-19; the sequence is TTPCMVRTSQVL. The segment at 27-77 is interaction with EFNB1; sequence ADRAKDKGAGMPQSDVTKDSWAAEPEHSSKETEVVEVKSMGENLSKKLQGG. Over residues 50-61 the composition is skewed to basic and acidic residues; sequence EPEHSSKETEVV. A Glycyl lysine isopeptide (Lys-Gly) (interchain with G-Cter in SUMO2) cross-link involves residue lysine 64. 2 C2H2-type zinc fingers span residues 78–101 and 110–133; these read YECK…DMQH and YVCA…SKFH. Residues 164–214 are disordered; it reads PITASGPGSSDNDPGVSVGKTPMTKTGKLKADAKKVPKKPDEAAPENHMEG. Basic and acidic residues predominate over residues 192–214; sequence LKADAKKVPKKPDEAAPENHMEG. A required for homodimerization region spans residues 195–358; it reads DAKKVPKKPD…PAQLTPTKVS (164 aa). 4 DNA-binding regions (homeobox) span residues 263–324, 439–501, 530–591, and 628–690; these read NTTK…WSPE, TPAS…IVHI, PQKF…EQAV, and SPSS…TLSW. The required for repressor activity stretch occupies residues 263–446; sequence NTTKYNSALD…PLTPASDRKK (184 aa). Positions 263–497 are required for interaction with NFYA; sequence NTTKYNSALD…SDHRYRCQRG (235 aa). The segment at 317 to 446 is required for nuclear localization; it reads HGISWSPEEV…PLTPASDRKK (130 aa). The tract at residues 404-442 is disordered; the sequence is GQKRPLVTPQAAPEPKRPHIAQVPEPPPKVANTPLTPAS. A Glycyl lysine isopeptide (Lys-Gly) (interchain with G-Cter in SUMO2) cross-link involves residue lysine 455. 3 stretches are compositionally biased toward basic and acidic residues: residues 699-709, 730-746, and 813-824; these read MSDDRGRDAVS, YAKD…EKLV, and RVAEGTVERADS. Residues 699-836 are disordered; the sequence is MSDDRGRDAV…DSTPAEAGQA (138 aa). Serine 824 and serine 826 each carry phosphoserine.

It belongs to the ZHX family. In terms of assembly, homodimer (via homeobox domain 1). Heterodimer with ZHX1 (via homeobox domain 1). Heterodimer with ZHX3 (via homeobox domain 1). Heterodimerization with ZHX1 is not necessary for repressor activity. Interacts (via homeobox domain) with NFYA (via N-terminus). Interacts with EFNB1 intracellular domain peptide; the interaction enhances ZHX2 transcriptional repression activity. Expressed in retina where it localizes to Muller glial cells of the inner nuclear layer (at protein level). Detected in heart, brain, spleen, lung, liver, skeletal muscle, kidney and testis.

The protein localises to the nucleus. Its function is as follows. Acts as a transcriptional repressor. Represses the promoter activity of the CDC25C gene stimulated by NFYA. May play a role in retinal development where it regulates the composition of bipolar cell populations, by promoting differentiation of bipolar OFF-type cells. In the brain, may promote maintenance and suppress differentiation of neural progenitor cells in the developing cortex. The polypeptide is Zinc fingers and homeoboxes protein 2 (Zhx2) (Mus musculus (Mouse)).